The sequence spans 279 residues: MTTRITARFTELAAEGRPGLVTFITAGDPDYDTALSILRGLPEAGADVIEVGIPFTDPMADGPAIQAAGLRALKGGQTLAKTLDMVRAFRDENDTTPVVLMGYYNPIYIYGVPRFIADAKAAGVDGLIVVDLPPEEDNELCLPALDAGLDFIRLATPTTDEKRLPAVLAHTAGFVYYVSITGITGSATPDANAVAGAVARIKQHTTLPVAVGFGVKTPAQAAAIAAGADGVVVGSALVEAVRKTLDEDGKATVNTVPAVTALVQELAEAVRGVNRAAAE.

Active-site proton acceptor residues include Glu50 and Asp61.

Belongs to the TrpA family. Tetramer of two alpha and two beta chains.

It catalyses the reaction (1S,2R)-1-C-(indol-3-yl)glycerol 3-phosphate + L-serine = D-glyceraldehyde 3-phosphate + L-tryptophan + H2O. The protein operates within amino-acid biosynthesis; L-tryptophan biosynthesis; L-tryptophan from chorismate: step 5/5. In terms of biological role, the alpha subunit is responsible for the aldol cleavage of indoleglycerol phosphate to indole and glyceraldehyde 3-phosphate. The chain is Tryptophan synthase alpha chain from Azorhizobium caulinodans (strain ATCC 43989 / DSM 5975 / JCM 20966 / LMG 6465 / NBRC 14845 / NCIMB 13405 / ORS 571).